We begin with the raw amino-acid sequence, 213 residues long: 3-isopropylmalate dehydratase small subunit (213 aa).

The protein belongs to the LeuD family. LeuD type 1 subfamily. In terms of assembly, heterodimer of LeuC and LeuD.

It carries out the reaction (2R,3S)-3-isopropylmalate = (2S)-2-isopropylmalate. It participates in amino-acid biosynthesis; L-leucine biosynthesis; L-leucine from 3-methyl-2-oxobutanoate: step 2/4. Catalyzes the isomerization between 2-isopropylmalate and 3-isopropylmalate, via the formation of 2-isopropylmaleate. In Pseudomonas syringae pv. tomato (strain ATCC BAA-871 / DC3000), this protein is 3-isopropylmalate dehydratase small subunit.